Consider the following 228-residue polypeptide: MENISIRDMLQAGVHFGHQTRYWNPKMKPFIFGVRNKIHIIDLETTSVMFRQALIELNKIAALKGKILFVGTKRAASESVKKTALACNQFFVNHRWLGGMLTNWKTVRQSIKRLKDLEIQSQDGTFKKLTKKEALILNRELINLENSLGGIKNMGGLPDAIFAVGATHEHIAIKEANSLGIPVFAIVDTNSNPDGIDFVIPGNDDAVRAINLYLNIISNMIHINACNT.

It belongs to the universal ribosomal protein uS2 family.

The protein is Small ribosomal subunit protein uS2 of Blochmanniella pennsylvanica (strain BPEN).